A 222-amino-acid polypeptide reads, in one-letter code: Phosphoenolpyruvate guanylyltransferase (222 aa).

Positions 147, 163, and 166 each coordinate phosphoenolpyruvate.

It belongs to the CofC family.

The enzyme catalyses phosphoenolpyruvate + GTP + H(+) = enolpyruvoyl-2-diphospho-5'-guanosine + diphosphate. It participates in cofactor biosynthesis; coenzyme F420 biosynthesis. In terms of biological role, guanylyltransferase that catalyzes the activation of phosphoenolpyruvate (PEP) as enolpyruvoyl-2-diphospho-5'-guanosine, via the condensation of PEP with GTP. It is involved in the biosynthesis of coenzyme F420, a hydride carrier cofactor. The sequence is that of Phosphoenolpyruvate guanylyltransferase from Streptosporangium roseum (strain ATCC 12428 / DSM 43021 / JCM 3005 / KCTC 9067 / NCIMB 10171 / NRRL 2505 / NI 9100).